The primary structure comprises 253 residues: Trypsin delta (253 aa).

The signal sequence occupies residues 1 to 22 (MLKFVILLSAVACALGGTIPEG). A propeptide spans 23–30 (LLPQLDGR) (activation peptide). The region spanning 31–253 (IVGGTATTIS…DLRAWVVRNA (223 aa)) is the Peptidase S1 domain. An intrachain disulfide couples Cys-56 to Cys-72. Active-site charge relay system residues include His-71 and Asp-116. 2 cysteine pairs are disulfide-bonded: Cys-180/Cys-197 and Cys-206/Cys-230. Catalysis depends on Ser-210, which acts as the Charge relay system.

The protein belongs to the peptidase S1 family.

Its subcellular location is the secreted. The protein localises to the extracellular space. It carries out the reaction Preferential cleavage: Arg-|-Xaa, Lys-|-Xaa.. The sequence is that of Trypsin delta from Drosophila erecta (Fruit fly).